The sequence spans 245 residues: tRNA pseudouridine synthase A (245 aa).

Asp-52 serves as the catalytic Nucleophile. Tyr-112 contacts substrate.

The protein belongs to the tRNA pseudouridine synthase TruA family. As to quaternary structure, homodimer.

The catalysed reaction is uridine(38/39/40) in tRNA = pseudouridine(38/39/40) in tRNA. Its function is as follows. Formation of pseudouridine at positions 38, 39 and 40 in the anticodon stem and loop of transfer RNAs. The chain is tRNA pseudouridine synthase A from Dictyoglomus thermophilum (strain ATCC 35947 / DSM 3960 / H-6-12).